The following is a 261-amino-acid chain: Small ribosomal subunit protein uS2 (261 aa).

Residues 224–261 (GRQGEDDEAVQQEEVAEGVSKDSLEDLKKTVEEGSNEE) form a disordered region. Acidic residues predominate over residues 228–239 (EDDEAVQQEEVA). Residues 242 to 255 (VSKDSLEDLKKTVE) show a composition bias toward basic and acidic residues.

This sequence belongs to the universal ribosomal protein uS2 family.

The sequence is that of Small ribosomal subunit protein uS2 (rpsB) from Pediococcus acidilactici.